A 335-amino-acid chain; its full sequence is Dihydroorotate dehydrogenase (quinone) (335 aa).

Residues 59-63 (AGADK) and threonine 83 contribute to the FMN site. Residue lysine 63 coordinates substrate. 108-112 (NRNGF) is a binding site for substrate. FMN contacts are provided by asparagine 136 and asparagine 169. Asparagine 169 contacts substrate. The Nucleophile role is filled by serine 172. Residue asparagine 174 coordinates substrate. Residues lysine 214 and glycine 242 each contribute to the FMN site. Position 243–244 (243–244 (NT)) interacts with substrate. Residues glycine 265, glycine 294, and 315–316 (YS) each bind FMN.

Belongs to the dihydroorotate dehydrogenase family. Type 2 subfamily. In terms of assembly, monomer. The cofactor is FMN.

The protein resides in the cell membrane. The enzyme catalyses (S)-dihydroorotate + a quinone = orotate + a quinol. The protein operates within pyrimidine metabolism; UMP biosynthesis via de novo pathway; orotate from (S)-dihydroorotate (quinone route): step 1/1. Its function is as follows. Catalyzes the conversion of dihydroorotate to orotate with quinone as electron acceptor. The sequence is that of Dihydroorotate dehydrogenase (quinone) from Glaesserella parasuis serovar 5 (strain SH0165) (Haemophilus parasuis).